The sequence spans 159 residues: GDP-mannose mannosyl hydrolase (159 aa).

Residues 2–3, Phe8, and Arg36 contribute to the substrate site; that span reads FL. Residues 13 to 153 enclose the Nudix hydrolase domain; it reads RSTPLVSLDF…SRAYFLAEKR (141 aa). Mg(2+) is bound by residues Gly49, Glu69, and Gln122. A Nudix box motif is present at residues 50–71; it reads GRVQKDETLEAAFERLTMAELG.

As to quaternary structure, homodimer. The cofactor is Mg(2+).

The enzyme catalyses GDP-alpha-D-mannose + H2O = D-mannose + GDP + H(+). Hydrolyzes both GDP-mannose and GDP-glucose. Could participate in the regulation of cell wall biosynthesis by influencing the concentration of GDP-mannose or GDP-glucose in the cell. Might also be involved in the biosynthesis of the slime polysaccharide colanic acid. This Escherichia coli (strain K12) protein is GDP-mannose mannosyl hydrolase.